A 376-amino-acid polypeptide reads, in one-letter code: Galactoside alpha-(1,2)-fucosyltransferase 1 (376 aa).

The Cytoplasmic segment spans residues 1–12; that stretch reads MWTPSRKQLCLA. Residues 13–29 traverse the membrane as a helical; Signal-anchor for type II membrane protein segment; sequence FLSVCVLSAGSFFFHLN. Topologically, residues 30 to 376 are lumenal; sequence GGNFFQNALT…WETDSLFRLA (347 aa). N-linked (GlcNAc...) asparagine glycans are attached at residues asparagine 64, asparagine 302, and asparagine 328.

It belongs to the glycosyltransferase 11 family.

The protein localises to the golgi apparatus. The protein resides in the golgi stack membrane. The enzyme catalyses a beta-D-galactosyl-(1-&gt;4)-N-acetyl-beta-D-glucosaminyl derivative + GDP-beta-L-fucose = an alpha-L-Fuc-(1-&gt;2)-beta-D-Gal-(1-&gt;4)-beta-D-GlcNAc derivative + GDP + H(+). It catalyses the reaction a ganglioside GA1 + GDP-beta-L-fucose = a ganglioside Fuc-GA1 + GDP + H(+). The catalysed reaction is a beta-D-Gal-(1-&gt;3)-beta-D-GlcNAc-(1-&gt;3)-beta-D-Gal-(1-&gt;4)-beta-D-Glc-(1&lt;-&gt;1')-Cer(d18:1(4E)) + GDP-beta-L-fucose = alpha-L-fucosyl-(1-&gt;2)- beta-D-galactosyl-(1-&gt;3)-N-acetyl-beta-D-glucosaminyl-(1-&gt;3)-beta-D-galactosyl-(1-&gt;4)-beta-D-glucosyl-(1&lt;-&gt;1')-N-acylsphing-4-enine + GDP + H(+). It carries out the reaction a neolactoside nLc4Cer(d18:1(4E)) + GDP-beta-L-fucose = a neolactoside IV(2)-alpha-Fuc-nLc4Cer(d18:1(4E)) + GDP + H(+). The enzyme catalyses a ganglioside GM1 + GDP-beta-L-fucose = a ganglioside Fuc-GM1 + GDP + H(+). It catalyses the reaction beta-D-galactosyl-(1-&gt;3)-N-acetyl-D-galactosamine + GDP-beta-L-fucose = alpha-L-fucosyl-(1-&gt;2)-beta-D-galactosyl-(1-&gt;3)-N-acetyl-D-galactosamine + GDP + H(+). It participates in protein modification; protein glycosylation. Catalyzes the transfer of L-fucose, from a guanosine diphosphate-beta-L-fucose, to the terminal galactose residue of glycoconjugates through an alpha(1,2) linkage leading to H antigen synthesis that is an intermediate substrate in the synthesis of ABO blood group antigens. H antigen is essential for maturation of the glomerular layer of the main olfactory bulb, in cell migration and early cell-cell contacts during tumor associated angiogenesis. Preferentially fucosylates soluble lactose and to a lesser extent fucosylates glycolipids gangliosides GA1 and GM1a. In Rattus norvegicus (Rat), this protein is Galactoside alpha-(1,2)-fucosyltransferase 1.